The primary structure comprises 1159 residues: WASH complex subunit 5 (1159 aa).

The protein belongs to the strumpellin family. As to quaternary structure, component of the WASH core complex also described as WASH regulatory complex (SHRC) composed of WASH (WASHC1, WASH2P or WASH3P), WASHC2 (WASHC2A or WASHC2C), WASHC3, WASHC4 and WASHC5. The WASH core complex associates via WASHC2 with the F-actin-capping protein dimer (formed by CAPZA1, CAPZA2 or CAPZA3 and CAPZB) in a transient or substoichiometric manner which was initially described as WASH complex. Interacts with VCP, PI4K2A.

The protein localises to the cytoplasm. It localises to the cytosol. It is found in the endoplasmic reticulum. The protein resides in the early endosome. Its function is as follows. Acts as a component of the WASH core complex that functions as a nucleation-promoting factor (NPF) at the surface of endosomes, where it recruits and activates the Arp2/3 complex to induce actin polymerization, playing a key role in the fission of tubules that serve as transport intermediates during endosome sorting. May be involved in axonal outgrowth. Involved in cellular localization of ADRB2. Involved in cellular trafficking of BLOC-1 complex cargos such as ATP7A and VAMP7. Involved in cytokinesis and following polar body extrusion during oocyte meiotic maturation. The polypeptide is WASH complex subunit 5 (Mus musculus (Mouse)).